The following is a 286-amino-acid chain: Bifunctional protein FolD (286 aa).

NADP(+) is bound by residues 165–167, S190, and V231; that span reads GRS.

This sequence belongs to the tetrahydrofolate dehydrogenase/cyclohydrolase family. As to quaternary structure, homodimer.

It catalyses the reaction (6R)-5,10-methylene-5,6,7,8-tetrahydrofolate + NADP(+) = (6R)-5,10-methenyltetrahydrofolate + NADPH. The catalysed reaction is (6R)-5,10-methenyltetrahydrofolate + H2O = (6R)-10-formyltetrahydrofolate + H(+). Its pathway is one-carbon metabolism; tetrahydrofolate interconversion. Functionally, catalyzes the oxidation of 5,10-methylenetetrahydrofolate to 5,10-methenyltetrahydrofolate and then the hydrolysis of 5,10-methenyltetrahydrofolate to 10-formyltetrahydrofolate. The chain is Bifunctional protein FolD from Bacillus thuringiensis (strain Al Hakam).